The sequence spans 1039 residues: FERM domain-containing protein 4A (1039 aa).

One can recognise an FERM domain in the interval 20–322 (RRCQVHLLDD…SQHQFYLDRK (303 aa)). The segment at 358–420 (KGKIISGSSG…KLCLREAELT (63 aa)) is necessary for interaction with CYTH1. Residues 366-382 (SGSLLSSGSQESDSSQS) are compositionally biased toward low complexity. The interval 366–386 (SGSLLSSGSQESDSSQSAKKD) is disordered. A coiled-coil region spans residues 382–416 (SAKKDMLAALKSRQEALEETLRQRLEELKKLCLRE). A Phosphoserine modification is found at Ser530. The tract at residues 553 to 680 (DEDSQVTSTI…MPSTPDLRVR (128 aa)) is disordered. Residues 571-586 (GLPPRPPSHNRPPPPQ) show a composition bias toward pro residues. The interval 579–939 (HNRPPPPQSL…QWYQRSTASH (361 aa)) is necessary for tight junction and adherens junction localization; Requires for interaction with PARD3. Phosphoserine is present on residues Ser604 and Ser615. Residues 623 to 638 (VKKRSSHSHSSSHKRF) are compositionally biased toward basic residues. A phosphoserine mark is found at Ser681 and Ser711. Disordered stretches follow at residues 713–756 (ESQG…HSSS) and 772–813 (AEDS…AGGA). A compositionally biased stretch (low complexity) spans 788–800 (RAAGALGSASSGS). Phosphoserine is present on residues Ser800, Ser872, and Ser901. Disordered regions lie at residues 879–968 (FKES…STFV) and 980–1039 (CKAT…STDE). Over residues 896 to 905 (LTPSRSQILR) the composition is skewed to polar residues. The span at 912–929 (EGAHDKGAGRAAVSDELR) shows a compositional bias: basic and acidic residues. The segment covering 946 to 966 (SHTSSTSSDSGSQYSTSSQST) has biased composition (low complexity). Composition is skewed to polar residues over residues 986-1000 (ALPQ…SSEI) and 1013-1023 (TWQTGEATENS).

Interacts (via coiled-coil domain) with CYTH1 (via coiled-coil domain). Interacts with PARD3 (via coiled-coil domain). Found in a complex with PARD3, CYTH1 and FRMD4A. Interacts with CYTH2. Interacts with CYTH3.

It localises to the cytoplasm. Its subcellular location is the cytoskeleton. The protein localises to the cell junction. It is found in the adherens junction. The protein resides in the tight junction. Functionally, scaffolding protein that regulates epithelial cell polarity by connecting ARF6 activation with the PAR3 complex. Plays a redundant role with FRMD4B in epithelial polarization. May regulate MAPT secretion by activating ARF6-signaling. The polypeptide is FERM domain-containing protein 4A (Homo sapiens (Human)).